The primary structure comprises 386 residues: MNIHEYQAKEILRKYGVPTSTGLVVTKTEKINDTIDKLNTEVYVVKAQIHAGGRGKAGGVKVVKSKEEAKKVAHDMFGINLVTHQTGPQGQKVNRLYIESGCDILKEYYFSIVFDRSASCITFIASTEGGVDIEEIAEKTPEKIIKFSVDPATGLQDFHMRGIAYELGFKDNQAKQMKEIVKSVYNAFIETDATQIEINPLIVNSDGNLLALDAKITFDDNGLFQHPNITAMRDHDEEDPLETRAANAGLSYVKMDGNIGCMVNGAGLAMATMDIIKLYGASPANFLDVGGGADRERIKEALKIILSDKEVQGILVNIFGGIMRCDIIAEGIIAAAKDIGIKVPLVVRLAGTNVEKGKEILSNSGLEIIPAHDLADAANKIVEAIR.

An ATP-grasp domain is found at 9–244 (KEILRKYGVP…HDEEDPLETR (236 aa)). ATP-binding positions include Lys46, 53–55 (GRG), Glu99, Cys102, and Glu107. Positions 199 and 213 each coordinate Mg(2+). Residues Asn264 and 321-323 (GIM) each bind substrate.

This sequence belongs to the succinate/malate CoA ligase beta subunit family. As to quaternary structure, heterotetramer of two alpha and two beta subunits. Mg(2+) serves as cofactor.

It catalyses the reaction succinate + ATP + CoA = succinyl-CoA + ADP + phosphate. It carries out the reaction GTP + succinate + CoA = succinyl-CoA + GDP + phosphate. It participates in carbohydrate metabolism; tricarboxylic acid cycle; succinate from succinyl-CoA (ligase route): step 1/1. Succinyl-CoA synthetase functions in the citric acid cycle (TCA), coupling the hydrolysis of succinyl-CoA to the synthesis of either ATP or GTP and thus represents the only step of substrate-level phosphorylation in the TCA. The beta subunit provides nucleotide specificity of the enzyme and binds the substrate succinate, while the binding sites for coenzyme A and phosphate are found in the alpha subunit. This is Succinate--CoA ligase [ADP-forming] subunit beta from Rickettsia massiliae (strain Mtu5).